The primary structure comprises 190 residues: Xanthine phosphoribosyltransferase (190 aa).

Xanthine is bound by residues L20 and N27. 129–133 (ANGAA) lines the 5-phospho-alpha-D-ribose 1-diphosphate pocket. K157 contacts xanthine.

Belongs to the purine/pyrimidine phosphoribosyltransferase family. Xpt subfamily. As to quaternary structure, homodimer.

Its subcellular location is the cytoplasm. It catalyses the reaction XMP + diphosphate = xanthine + 5-phospho-alpha-D-ribose 1-diphosphate. It functions in the pathway purine metabolism; XMP biosynthesis via salvage pathway; XMP from xanthine: step 1/1. Functionally, converts the preformed base xanthine, a product of nucleic acid breakdown, to xanthosine 5'-monophosphate (XMP), so it can be reused for RNA or DNA synthesis. This is Xanthine phosphoribosyltransferase from Laribacter hongkongensis (strain HLHK9).